Consider the following 323-residue polypeptide: Small ribosomal subunit protein uS2 (323 aa).

A disordered region spans residues 295–323; the sequence is VVNRDRAGFNKKQPKAEEAAKPAEKKAEK.

Belongs to the universal ribosomal protein uS2 family.

The polypeptide is Small ribosomal subunit protein uS2 (Mycoplasmoides gallisepticum (strain R(low / passage 15 / clone 2)) (Mycoplasma gallisepticum)).